The chain runs to 268 residues: Undecaprenyl-diphosphatase (268 aa).

7 consecutive transmembrane segments (helical) span residues 5–25 (SIIS…IPVS), 43–63 (GNTF…LVYF), 84–104 (LSVL…HGFI), 109–129 (FETP…LYVI), 184–204 (AAEF…ALDL), 213–233 (IDDI…GIFV), and 248–268 (PFAI…WLLG).

It belongs to the UppP family.

The protein localises to the cell inner membrane. It carries out the reaction di-trans,octa-cis-undecaprenyl diphosphate + H2O = di-trans,octa-cis-undecaprenyl phosphate + phosphate + H(+). Functionally, catalyzes the dephosphorylation of undecaprenyl diphosphate (UPP). Confers resistance to bacitracin. In Sinorhizobium medicae (strain WSM419) (Ensifer medicae), this protein is Undecaprenyl-diphosphatase.